Here is a 73-residue protein sequence, read N- to C-terminus: Translation initiation factor IF-1 (73 aa).

An S1-like domain is found at 1–73 (MPKKDGVIEI…SRGRIVYRYK (73 aa)).

Belongs to the IF-1 family. As to quaternary structure, component of the 30S ribosomal translation pre-initiation complex which assembles on the 30S ribosome in the order IF-2 and IF-3, IF-1 and N-formylmethionyl-tRNA(fMet); mRNA recruitment can occur at any time during PIC assembly.

It localises to the cytoplasm. Its function is as follows. One of the essential components for the initiation of protein synthesis. Stabilizes the binding of IF-2 and IF-3 on the 30S subunit to which N-formylmethionyl-tRNA(fMet) subsequently binds. Helps modulate mRNA selection, yielding the 30S pre-initiation complex (PIC). Upon addition of the 50S ribosomal subunit IF-1, IF-2 and IF-3 are released leaving the mature 70S translation initiation complex. The protein is Translation initiation factor IF-1 of Kineococcus radiotolerans (strain ATCC BAA-149 / DSM 14245 / SRS30216).